The chain runs to 130 residues: Protachykinin-1 (130 aa).

The signal sequence occupies residues 1-19 (MKILVAVAVFFLVSTQLSA). Residues 20 to 56 (EEIGANDDLNYWSDWSDSDQIKEALPEPFEHILQRIA) constitute a propeptide that is removed on maturation. Residues M68 and M107 each carry the methionine amide modification.

Belongs to the tachykinin family. The substance P form is cleaved at Pro-59 by the prolyl endopeptidase FAP (seprase) activity (in vitro). Substance P is also cleaved and degraded by Angiotensin-converting enzyme (ACE) and neprilysin (MME).

Its subcellular location is the secreted. Functionally, tachykinins are active peptides which excite neurons, evoke behavioral responses, are potent vasodilators and secretagogues, and contract (directly or indirectly) many smooth muscles. The sequence is that of Protachykinin-1 (TAC1) from Mesocricetus auratus (Golden hamster).